The sequence spans 313 residues: B3 domain-containing protein At2g31720 (313 aa).

The disordered stretch occupies residues 80 to 110 (KNQDPEQNPNRVASSPSSCHLESKRPQKVVS). The segment covering 84–99 (PEQNPNRVASSPSSCH) has biased composition (polar residues). The TF-B3 DNA-binding region spans 169 to 267 (WKQILDMDFL…MLFFAFVLSD (99 aa)).

The protein localises to the nucleus. The polypeptide is B3 domain-containing protein At2g31720 (ARF70) (Arabidopsis thaliana (Mouse-ear cress)).